A 98-amino-acid polypeptide reads, in one-letter code: NADH-ubiquinone oxidoreductase chain 4L (98 aa).

3 consecutive transmembrane segments (helical) span residues 1 to 21, 27 to 47, and 61 to 81; these read MIPTYMNIMLAFTISLLGMLT, VASLLCLEGMMMSLFIMTTLI, and IILLVFAACEAAVGLALLISI.

Belongs to the complex I subunit 4L family. In terms of assembly, core subunit of respiratory chain NADH dehydrogenase (Complex I) which is composed of 45 different subunits.

It is found in the mitochondrion inner membrane. It catalyses the reaction a ubiquinone + NADH + 5 H(+)(in) = a ubiquinol + NAD(+) + 4 H(+)(out). Core subunit of the mitochondrial membrane respiratory chain NADH dehydrogenase (Complex I) which catalyzes electron transfer from NADH through the respiratory chain, using ubiquinone as an electron acceptor. Part of the enzyme membrane arm which is embedded in the lipid bilayer and involved in proton translocation. The polypeptide is NADH-ubiquinone oxidoreductase chain 4L (MT-ND4L) (Macaca nigra (Celebes black macaque)).